We begin with the raw amino-acid sequence, 359 residues long: MGSDTSTQLLGTDGIFFDAAWDVRVTDTSLRDGSHHKRHQFTADEVRAIVAALDGAGVPVIEVTHGDGLGGSSFNYGFSKTPEQELIKLAAQTATNAKIAFLMLPGVGTKEDIIEAQGNGGSICRIATHCTEADVSIQHFGLARERGLETVGFLMMSHTISPEKLAKQARIMADAGCQCVYVVDSAGALVLDGVADRVAAVVAELGSDAQVGFHGHENLGLGVANSIEAVRAGAKQIDGSTRRFGAGAGNAPVEALIGVFDKIGVKTGIDFFDIADAAEEVVAPAMPAECLLDRNALIMGYSGVYSSFLKHAIRQGERYGVPAHQLLHRAGERKLIGGQEDQLIDIALEIQRENAANGQ.

In terms of domain architecture, Pyruvate carboxyltransferase spans Val-23 to Ala-275. Position 31 to 32 (Arg-31 to Asp-32) interacts with substrate. Asp-32 is a Mn(2+) binding site. Catalysis depends on His-35, which acts as the Proton acceptor. Substrate contacts are provided by Ser-185 and His-214. The Mn(2+) site is built by His-214 and His-216. Tyr-305 is a binding site for substrate.

This sequence belongs to the 4-hydroxy-2-oxovalerate aldolase family.

The enzyme catalyses (S)-4-hydroxy-2-oxopentanoate = acetaldehyde + pyruvate. This chain is 4-hydroxy-2-oxovalerate aldolase 1, found in Mycobacteroides abscessus (strain ATCC 19977 / DSM 44196 / CCUG 20993 / CIP 104536 / JCM 13569 / NCTC 13031 / TMC 1543 / L948) (Mycobacterium abscessus).